Consider the following 279-residue polypeptide: MLFIELLKAIFFGVIEGVTEWLPISSTGHLILVQEFIRLHQDKAFMEMFNIVIQLGAIIAVIVIYFERLNPFQPGKSPQQIRLTWQLWLKVAIACIPSIIIAVPLDDWFDAHFNHMLPIAIALIVYGIAFLWIEKRNQTLEPRVVKLSRMSYKTAFFIGCFQVLSIIPGTSRSGATILGAIILGASRTVAADFTFFLAIPTMFGYSGLKALKFFIDGNHLTLSQLLVLLVASLTAFAVSLYVIKLLTDYVKKHDFTVFGRYRIVLGSLLIVYSVFKSLF.

A run of 8 helical transmembrane segments spans residues 2 to 22 (LFIE…TEWL), 44 to 64 (AFME…VIVI), 85 to 105 (WQLW…AVPL), 113 to 133 (FNHM…FLWI), 163 to 183 (VLSI…AIIL), 188 to 208 (TVAA…YSGL), 225 to 245 (LLVL…VIKL), and 255 to 275 (FTVF…YSVF).

Belongs to the UppP family.

The protein localises to the cell membrane. The catalysed reaction is di-trans,octa-cis-undecaprenyl diphosphate + H2O = di-trans,octa-cis-undecaprenyl phosphate + phosphate + H(+). Catalyzes the dephosphorylation of undecaprenyl diphosphate (UPP). Confers resistance to bacitracin. This Streptococcus equi subsp. equi (strain 4047) protein is Undecaprenyl-diphosphatase.